Reading from the N-terminus, the 190-residue chain is Protein GrpE (190 aa).

Residues 1–18 show a composition bias toward polar residues; the sequence is MTETPNTSSEEIQTSEPS. The tract at residues 1–21 is disordered; that stretch reads MTETPNTSSEEIQTSEPSPDN.

It belongs to the GrpE family. Homodimer.

The protein resides in the cytoplasm. Participates actively in the response to hyperosmotic and heat shock by preventing the aggregation of stress-denatured proteins, in association with DnaK and GrpE. It is the nucleotide exchange factor for DnaK and may function as a thermosensor. Unfolded proteins bind initially to DnaJ; upon interaction with the DnaJ-bound protein, DnaK hydrolyzes its bound ATP, resulting in the formation of a stable complex. GrpE releases ADP from DnaK; ATP binding to DnaK triggers the release of the substrate protein, thus completing the reaction cycle. Several rounds of ATP-dependent interactions between DnaJ, DnaK and GrpE are required for fully efficient folding. The polypeptide is Protein GrpE (Chlamydia trachomatis serovar L2 (strain ATCC VR-902B / DSM 19102 / 434/Bu)).